Consider the following 128-residue polypeptide: Insulin-like growth factor 2 (128 aa).

A signal peptide spans 1-24 (MGISMGKSMLVLLTFLAFASCCIA). Residues 25–52 (AYRPSETLCGGELVDTLQFVCGDRGFYF) form a b region. Intrachain disulfides connect Cys-33–Cys-71, Cys-45–Cys-84, and Cys-70–Cys-75. The interval 53–64 (SRPASRVSRRSR) is c. The interval 65-85 (GIVEECCFRSCDLALLETYCA) is a. Residues 86-91 (TPAKSE) form a d region. A propeptide spans 92 to 128 (RDVSASLAVLPDNFPRYPVGKFFQYDTWRQSTQRLRR) (e peptide).

This sequence belongs to the insulin family. As to quaternary structure, interacts with MYORG; this interaction is required for IGF2 secretion. Interacts with integrins ITGAV:ITGB3 and ITGA6:ITGB4; integrin-binding is required for IGF2 signaling. Post-translationally, proteolytically processed by PCSK4, proIGF2 is cleaved at Arg-128 and Arg-92 to generate big-IGF2 and mature IGF2.

It is found in the secreted. Functionally, the insulin-like growth factors possess growth-promoting activity. Major fetal growth hormone in mammals. Plays a key role in regulating fetoplacental development. IGF2 is influenced by placental lactogen. Also involved in tissue differentiation. In adults, involved in glucose metabolism in adipose tissue, skeletal muscle and liver. Acts as a ligand for integrin which is required for IGF2 signaling. Positively regulates myogenic transcription factor MYOD1 function by facilitating the recruitment of transcriptional coactivators, thereby controlling muscle terminal differentiation. Inhibits myoblast differentiation and metabolism via increasing the mitochondrial respiration rate. Preptin undergoes glucose-mediated co-secretion with insulin, and acts as a physiological amplifier of glucose-mediated insulin secretion. Exhibits osteogenic properties by increasing osteoblast mitogenic activity through phosphoactivation of MAPK1 and MAPK3. The chain is Insulin-like growth factor 2 from Cavia porcellus (Guinea pig).